The primary structure comprises 917 residues: Protein translocase subunit SecA (917 aa).

ATP contacts are provided by residues glutamine 87, 105–109 (GEGKT), and aspartate 501. The Zn(2+) site is built by cysteine 901, cysteine 903, cysteine 912, and histidine 913.

The protein belongs to the SecA family. Monomer and homodimer. Part of the essential Sec protein translocation apparatus which comprises SecA, SecYEG and auxiliary proteins SecDF-YajC and YidC. Zn(2+) is required as a cofactor.

It localises to the cell inner membrane. The protein localises to the cytoplasm. It carries out the reaction ATP + H2O + cellular proteinSide 1 = ADP + phosphate + cellular proteinSide 2.. Functionally, part of the Sec protein translocase complex. Interacts with the SecYEG preprotein conducting channel. Has a central role in coupling the hydrolysis of ATP to the transfer of proteins into and across the cell membrane, serving both as a receptor for the preprotein-SecB complex and as an ATP-driven molecular motor driving the stepwise translocation of polypeptide chains across the membrane. The sequence is that of Protein translocase subunit SecA from Granulibacter bethesdensis (strain ATCC BAA-1260 / CGDNIH1).